Here is a 356-residue protein sequence, read N- to C-terminus: DNA polymerase IV (356 aa).

Residues 6-187 (IIHIDMDYFF…LDIGDFPGVG (182 aa)) form the UmuC domain. Mg(2+) contacts are provided by D10 and D105. The active site involves E106.

Belongs to the DNA polymerase type-Y family. Monomer. Mg(2+) serves as cofactor.

Its subcellular location is the cytoplasm. The catalysed reaction is DNA(n) + a 2'-deoxyribonucleoside 5'-triphosphate = DNA(n+1) + diphosphate. Its function is as follows. Poorly processive, error-prone DNA polymerase involved in untargeted mutagenesis. Copies undamaged DNA at stalled replication forks, which arise in vivo from mismatched or misaligned primer ends. These misaligned primers can be extended by PolIV. Exhibits no 3'-5' exonuclease (proofreading) activity. May be involved in translesional synthesis, in conjunction with the beta clamp from PolIII. In Staphylococcus aureus (strain COL), this protein is DNA polymerase IV.